Reading from the N-terminus, the 162-residue chain is Regulatory protein RecX (162 aa).

This sequence belongs to the RecX family.

It localises to the cytoplasm. In terms of biological role, modulates RecA activity. In Pectobacterium atrosepticum (strain SCRI 1043 / ATCC BAA-672) (Erwinia carotovora subsp. atroseptica), this protein is Regulatory protein RecX.